A 76-amino-acid polypeptide reads, in one-letter code: UPF0291 protein BPUM_1689 (76 aa).

Disordered regions lie at residues 1 to 31 and 56 to 76; these read MISK…TEQK and DPEG…QNLH. 2 stretches are compositionally biased toward basic and acidic residues: residues 12–31 and 63–76; these read ELSK…TEQK and TPEK…QNLH.

This sequence belongs to the UPF0291 family.

It localises to the cytoplasm. The sequence is that of UPF0291 protein BPUM_1689 from Bacillus pumilus (strain SAFR-032).